A 610-amino-acid chain; its full sequence is Elongation factor 4 (610 aa).

Positions 14–196 constitute a tr-type G domain; it reads NRIRNFSIIA…ALVANIPPPK (183 aa). GTP-binding positions include 26 to 31 and 143 to 146; these read DHGKST and NKID.

Belongs to the TRAFAC class translation factor GTPase superfamily. Classic translation factor GTPase family. LepA subfamily.

It is found in the cell inner membrane. The catalysed reaction is GTP + H2O = GDP + phosphate + H(+). Functionally, required for accurate and efficient protein synthesis under certain stress conditions. May act as a fidelity factor of the translation reaction, by catalyzing a one-codon backward translocation of tRNAs on improperly translocated ribosomes. Back-translocation proceeds from a post-translocation (POST) complex to a pre-translocation (PRE) complex, thus giving elongation factor G a second chance to translocate the tRNAs correctly. Binds to ribosomes in a GTP-dependent manner. The polypeptide is Elongation factor 4 (Legionella pneumophila (strain Lens)).